Here is a 642-residue protein sequence, read N- to C-terminus: 1-deoxy-D-xylulose-5-phosphate synthase (642 aa).

Thiamine diphosphate contacts are provided by residues His73 and Ser114–Ala116. Asp145 provides a ligand contact to Mg(2+). Thiamine diphosphate contacts are provided by residues Gly146–Ala147, Asn175, Phe286, and Glu367. Asn175 contacts Mg(2+).

This sequence belongs to the transketolase family. DXPS subfamily. As to quaternary structure, homodimer. It depends on Mg(2+) as a cofactor. Thiamine diphosphate serves as cofactor.

It catalyses the reaction D-glyceraldehyde 3-phosphate + pyruvate + H(+) = 1-deoxy-D-xylulose 5-phosphate + CO2. It functions in the pathway metabolic intermediate biosynthesis; 1-deoxy-D-xylulose 5-phosphate biosynthesis; 1-deoxy-D-xylulose 5-phosphate from D-glyceraldehyde 3-phosphate and pyruvate: step 1/1. Its function is as follows. Catalyzes the acyloin condensation reaction between C atoms 2 and 3 of pyruvate and glyceraldehyde 3-phosphate to yield 1-deoxy-D-xylulose-5-phosphate (DXP). The protein is 1-deoxy-D-xylulose-5-phosphate synthase of Saccharopolyspora erythraea (strain ATCC 11635 / DSM 40517 / JCM 4748 / NBRC 13426 / NCIMB 8594 / NRRL 2338).